The following is a 346-amino-acid chain: MSVVDFIQAITENKFGEYVLLGALLVGVFKLTVFILSVTSLLVDLFVLPATNLKTYGAKKGKWAVITGASDGIGKEYAFQLASKGFNVVLVSRTQAKLETLASEIEAKYKVETKVVAFDASTDAEDNYKSLGDAISGLPVTVLINNVGQSHSIPVPFLETENKELQDIITINVTATLKITQTVAPVIAETVSKEKKKVRGLILTMGSFGGLLPTPYLATYSGSKSFLQAWSAALAGELQSQGVDVELVISYLVTSAMSKIRRASLSIPSPKNFVRATLNGIGRRNGAQERYATSTPYWAHALMHFGIDQTVGVYSKLANSLNLNMHKSIRARALKKAARLAAEKKD.

A helical transmembrane segment spans residues 19 to 39 (VLLGALLVGVFKLTVFILSVT). Residues V65, D119, N146, Y220, K224, V253, and S255 each contribute to the NADP(+) site. Y220 functions as the Proton donor in the catalytic mechanism. The Lowers pKa of active site Tyr role is filled by K224.

It belongs to the short-chain dehydrogenases/reductases (SDR) family.

It localises to the endoplasmic reticulum membrane. It carries out the reaction a very-long-chain (3R)-3-hydroxyacyl-CoA + NADP(+) = a very-long-chain 3-oxoacyl-CoA + NADPH + H(+). It functions in the pathway lipid metabolism; fatty acid biosynthesis. Functionally, component of the microsomal membrane bound fatty acid elongation system, which produces the 26-carbon very long-chain fatty acids (VLCFA) from palmitate. Catalyzes the reduction of the 3-ketoacyl-CoA intermediate that is formed in each cycle of fatty acid elongation. VLCFAs serve as precursors for ceramide and sphingolipids. This Scheffersomyces stipitis (strain ATCC 58785 / CBS 6054 / NBRC 10063 / NRRL Y-11545) (Yeast) protein is Very-long-chain 3-oxoacyl-CoA reductase.